Here is a 905-residue protein sequence, read N- to C-terminus: DNA gyrase subunit A (905 aa).

Positions Ile-35 to Leu-524 constitute a Topo IIA-type catalytic domain. Tyr-123 functions as the O-(5'-phospho-DNA)-tyrosine intermediate in the catalytic mechanism. Residues Gln-551 to Gly-557 carry the GyrA-box motif.

The protein belongs to the type II topoisomerase GyrA/ParC subunit family. In terms of assembly, heterotetramer, composed of two GyrA and two GyrB chains. In the heterotetramer, GyrA contains the active site tyrosine that forms a transient covalent intermediate with DNA, while GyrB binds cofactors and catalyzes ATP hydrolysis.

The protein localises to the cytoplasm. It carries out the reaction ATP-dependent breakage, passage and rejoining of double-stranded DNA.. In terms of biological role, a type II topoisomerase that negatively supercoils closed circular double-stranded (ds) DNA in an ATP-dependent manner to modulate DNA topology and maintain chromosomes in an underwound state. Negative supercoiling favors strand separation, and DNA replication, transcription, recombination and repair, all of which involve strand separation. Also able to catalyze the interconversion of other topological isomers of dsDNA rings, including catenanes and knotted rings. Type II topoisomerases break and join 2 DNA strands simultaneously in an ATP-dependent manner. This is DNA gyrase subunit A from Rickettsia typhi (strain ATCC VR-144 / Wilmington).